Reading from the N-terminus, the 29-residue chain is Cytochrome c oxidase subunit 7A1, mitochondrial (29 aa).

Residues 1–13 (LENRVAEKQKLFQ) are compositionally biased toward basic and acidic residues. The disordered stretch occupies residues 1–29 (LENRVAEKQKLFQEDNGLPVHLKGGATDN).

It belongs to the cytochrome c oxidase VIIa family. Component of the complex IV (CIV, cytochrome c oxidase), a multisubunit enzyme composed of 14 subunits. The complex is composed of a catalytic core of 3 subunits MT-CO1, MT-CO2 and MT-CO3, encoded in the mitochondrial DNA, and 11 supernumerary subunits COX4I1 (or COX4I2), COX5A, COX5B, COX6A2 (or COX6A1), COX6B1 (or COX6B2), COX6C, COX7A1 (or COX7A2), COX7B, COX7C, COX8B and NDUFA4, which are encoded in the nuclear genome. The complex exists as a monomer or a dimer and forms supercomplexes (SCs) in the inner mitochondrial membrane with NADH-ubiquinone oxidoreductase (complex I, CI) and ubiquinol-cytochrome c oxidoreductase (cytochrome b-c1 complex, complex III, CIII), resulting in different assemblies (supercomplex SCI(1)III(2)IV(1) and megacomplex MCI(2)III(2)IV(2)).

The protein localises to the mitochondrion inner membrane. It functions in the pathway energy metabolism; oxidative phosphorylation. Its function is as follows. Component of the mitochondrial respiratory complex IV (CIV, also named cytochrome c oxidase complex), the last enzyme in the mitochondrial electron transport chain which drives oxidative phosphorylation. The CIV complex is the component of the respiratory chain that catalyzes the reduction of oxygen to water. Acts as an assembly factor that specifically drives the homodimerization of CIV complexes, mediating the formation of mitochondrial respiratory supercomplexes (respirasomes) containing two CIV: supercomplxes with two molecules of CIV show improved activity. Despite being highly expressed in brown adipose tissue, not required for thermogenesis. In Ovis aries (Sheep), this protein is Cytochrome c oxidase subunit 7A1, mitochondrial (COX7A1).